A 53-amino-acid chain; its full sequence is uncharacterized protein (53 aa).

Residues 13–35 form a helical membrane-spanning segment; it reads FLLHSFTFPIAHCPSFSWASFFF.

It localises to the membrane. This is an uncharacterized protein from Saccharomyces cerevisiae (strain ATCC 204508 / S288c) (Baker's yeast).